The primary structure comprises 91 residues: Protein SPATA45 homolog (91 aa).

The disordered stretch occupies residues R42–Y91. The segment covering G51–D70 has biased composition (polar residues). Over residues P76–Y91 the composition is skewed to basic and acidic residues.

It belongs to the SPATA45 family.

The chain is Protein SPATA45 homolog from Nematostella vectensis (Starlet sea anemone).